Here is a 271-residue protein sequence, read N- to C-terminus: Putative phosphoenolpyruvate synthase regulatory protein (271 aa).

151–158 serves as a coordination point for ADP; sequence GVSRSGKT.

Belongs to the pyruvate, phosphate/water dikinase regulatory protein family. PSRP subfamily.

It carries out the reaction [pyruvate, water dikinase] + ADP = [pyruvate, water dikinase]-phosphate + AMP + H(+). It catalyses the reaction [pyruvate, water dikinase]-phosphate + phosphate + H(+) = [pyruvate, water dikinase] + diphosphate. Its function is as follows. Bifunctional serine/threonine kinase and phosphorylase involved in the regulation of the phosphoenolpyruvate synthase (PEPS) by catalyzing its phosphorylation/dephosphorylation. The protein is Putative phosphoenolpyruvate synthase regulatory protein of Burkholderia lata (strain ATCC 17760 / DSM 23089 / LMG 22485 / NCIMB 9086 / R18194 / 383).